The primary structure comprises 430 residues: Adenosylhomocysteinase (430 aa).

Residues Thr56, Asp131, and Glu156 each coordinate substrate. 157-159 (TTT) serves as a coordination point for NAD(+). Lys186 and Asp190 together coordinate substrate. NAD(+) contacts are provided by residues Asn191, 220–225 (GFGDVG), Glu243, Asn278, 299–301 (IGH), and Asn344.

The protein belongs to the adenosylhomocysteinase family. NAD(+) serves as cofactor.

The protein localises to the cytoplasm. It carries out the reaction S-adenosyl-L-homocysteine + H2O = L-homocysteine + adenosine. The protein operates within amino-acid biosynthesis; L-homocysteine biosynthesis; L-homocysteine from S-adenosyl-L-homocysteine: step 1/1. Functionally, may play a key role in the regulation of the intracellular concentration of adenosylhomocysteine. The chain is Adenosylhomocysteinase from Halorhodospira halophila (strain DSM 244 / SL1) (Ectothiorhodospira halophila (strain DSM 244 / SL1)).